Consider the following 269-residue polypeptide: Signal recognition particle receptor subunit beta (269 aa).

Residues L35–I55 traverse the membrane as a helical segment. Residues G69–L77 and T90–S93 each bind GTP. S110 carries the phosphoserine modification. A GTP-binding site is contributed by G118. Position 212 is a phosphothreonine (T212). GTP is bound at residue A246.

This sequence belongs to the SRP receptor beta subunit family. Heterodimer with SRPRA.

Its subcellular location is the endoplasmic reticulum membrane. Its function is as follows. Component of the signal recognition particle (SRP) complex receptor (SR). Ensures, in conjunction with the SRP complex, the correct targeting of the nascent secretory proteins to the endoplasmic reticulum membrane system. May mediate the membrane association of SR. In Rattus norvegicus (Rat), this protein is Signal recognition particle receptor subunit beta (Srprb).